The following is a 291-amino-acid chain: Light-independent protochlorophyllide reductase iron-sulfur ATP-binding protein (291 aa).

ATP-binding positions include 10–15 and K39; that span reads GIGKST. Mg(2+) is bound at residue S14. Positions 95 and 129 each coordinate [4Fe-4S] cluster. 180 to 181 provides a ligand contact to ATP; that stretch reads NR.

It belongs to the NifH/BchL/ChlL family. Homodimer. Protochlorophyllide reductase is composed of three subunits; ChlL, ChlN and ChlB. It depends on [4Fe-4S] cluster as a cofactor.

It is found in the plastid. The protein resides in the chloroplast. It carries out the reaction chlorophyllide a + oxidized 2[4Fe-4S]-[ferredoxin] + 2 ADP + 2 phosphate = protochlorophyllide a + reduced 2[4Fe-4S]-[ferredoxin] + 2 ATP + 2 H2O. It participates in porphyrin-containing compound metabolism; chlorophyll biosynthesis (light-independent). In terms of biological role, component of the dark-operative protochlorophyllide reductase (DPOR) that uses Mg-ATP and reduced ferredoxin to reduce ring D of protochlorophyllide (Pchlide) to form chlorophyllide a (Chlide). This reaction is light-independent. The L component serves as a unique electron donor to the NB-component of the complex, and binds Mg-ATP. The sequence is that of Light-independent protochlorophyllide reductase iron-sulfur ATP-binding protein from Pinus koraiensis (Korean pine).